Reading from the N-terminus, the 537-residue chain is Eukaryotic translation initiation factor 3 subunit L (537 aa).

The span at 1–19 (MSRRVEFDLSTEDHSDRRR) shows a compositional bias: basic and acidic residues. Positions 1 to 30 (MSRRVEFDLSTEDHSDRRRTNTFSSSADED) are disordered. In terms of domain architecture, PCI spans 299–487 (EATKMFVNCL…GPSSADDDEP (189 aa)).

Belongs to the eIF-3 subunit L family. Component of the eukaryotic translation initiation factor 3 (eIF-3) complex.

The protein resides in the cytoplasm. Functionally, component of the eukaryotic translation initiation factor 3 (eIF-3) complex, which is involved in protein synthesis of a specialized repertoire of mRNAs and, together with other initiation factors, stimulates binding of mRNA and methionyl-tRNAi to the 40S ribosome. The eIF-3 complex specifically targets and initiates translation of a subset of mRNAs involved in cell proliferation. The polypeptide is Eukaryotic translation initiation factor 3 subunit L (Caenorhabditis elegans).